The chain runs to 202 residues: Venom allergen 5 (202 aa).

Cystine bridges form between Cys-4–Cys-16, Cys-8–Cys-101, and Cys-26–Cys-94. Tyr-107 bears the Phosphotyrosine mark. Lys-138 is a glycosylation site (N-linked (Glc) (glycation) lysine). A disulfide bridge links Cys-168 with Cys-185.

Belongs to the CRISP family. In terms of tissue distribution, expressed by the venom gland.

It localises to the secreted. Does not show toxicity when intravenously injected into mice tail. The protein is Venom allergen 5 of Vespa velutina (Asian yellow-legged hornet).